The primary structure comprises 59 residues: Conorfamide-Vc1 (59 aa).

The N-terminal stretch at 1-19 (MSGRGFLLLALLLLVTVEA) is a signal peptide. Positions 20–25 (TKVEKK) are excised as a propeptide. The interval 32–39 (AWSGPRNR) is positively charged region crucial for activity against MRGPRX1 receptors. Phenylalanine 43 carries the phenylalanine amide modification. The propeptide occupies 45–59 (RRDMQSPLLSERLRL).

This sequence belongs to the FARP (FMRFamide related peptide) family. In terms of tissue distribution, expressed by the venom duct.

It is found in the secreted. In terms of biological role, this peptide activates human and mouse sensory neuron-specific G-protein coupled receptors MRGPRX1. The activity on human receptors has been measured (EC(50)=1.8 uM). Compared with the agonist chloroquine (anti-malaria drug), it is 200-fold more potent. The peptide also causes an increase in cytosolic calcium in a specific subset of DRG neurons, and, in contrast to other Conus venom peptides, the peptide also affects a large fraction of the non-neuronal cells. In vivo, when intracranially injected into mice, it principally renders mice unable to move, and at very low doses, it causes hyperactivity. It also induces itch sensation, since intradermal cheek injection into humanized transgenic mouse (mouse MRGPRX1 replaced by human MRGPRX1) induces scratching. In vivo, when tested at high doses (10 uM) on zebrafish larvae, it induces a range of behavioral effects ranging from an early hypoactivity during the first hour of treatment to an increase in movement during the following hours when the larvae are submitted to strobe light phases. This Conus victoriae (Queen Victoria cone) protein is Conorfamide-Vc1.